The following is a 34-amino-acid chain: MSDIN-like toxin proprotein 5 (34 aa).

Residues 1 to 10 (MSDINTARLP) constitute a propeptide that is removed on maturation. Residues 11–20 (YVVFMSFIPP) constitute a cross-link (cyclopeptide (Tyr-Pro)). Positions 21–34 (CVNDDIQVVLTRGE) are excised as a propeptide.

Belongs to the MSDIN fungal toxin family. In terms of processing, processed by the macrocyclase-peptidase enzyme POPB to yield a toxic cyclic decapeptide. POPB first removes 10 residues from the N-terminus. Conformational trapping of the remaining peptide forces the enzyme to release this intermediate rather than proceed to macrocyclization. The enzyme rebinds the remaining peptide in a different conformation and catalyzes macrocyclization of the N-terminal 10 residues.

Its function is as follows. Probable toxin that belongs to the MSDIN-like toxin family responsible for a large number of food poisoning cases and deaths. This Amanita bisporigera (Destroying angel) protein is MSDIN-like toxin proprotein 5.